The primary structure comprises 262 residues: 3-methyl-2-oxobutanoate hydroxymethyltransferase (262 aa).

Mg(2+)-binding residues include Asp-42 and Asp-81. 3-methyl-2-oxobutanoate is bound by residues 42–43 (DS), Asp-81, and Lys-110. Glu-112 contacts Mg(2+). Residue Glu-179 is the Proton acceptor of the active site.

This sequence belongs to the PanB family. In terms of assembly, homodecamer; pentamer of dimers. The cofactor is Mg(2+).

It is found in the cytoplasm. The catalysed reaction is 3-methyl-2-oxobutanoate + (6R)-5,10-methylene-5,6,7,8-tetrahydrofolate + H2O = 2-dehydropantoate + (6S)-5,6,7,8-tetrahydrofolate. It participates in cofactor biosynthesis; (R)-pantothenate biosynthesis; (R)-pantoate from 3-methyl-2-oxobutanoate: step 1/2. Its function is as follows. Catalyzes the reversible reaction in which hydroxymethyl group from 5,10-methylenetetrahydrofolate is transferred onto alpha-ketoisovalerate to form ketopantoate. This chain is 3-methyl-2-oxobutanoate hydroxymethyltransferase, found in Methylobacillus flagellatus (strain ATCC 51484 / DSM 6875 / VKM B-1610 / KT).